A 292-amino-acid polypeptide reads, in one-letter code: NAD kinase (292 aa).

Residue aspartate 73 is the Proton acceptor of the active site. Residues 73–74, 147–148, histidine 158, arginine 175, aspartate 177, 188–193, and glutamine 247 each bind NAD(+); these read DG, NE, and TAYSLS.

This sequence belongs to the NAD kinase family. A divalent metal cation is required as a cofactor.

The protein localises to the cytoplasm. It carries out the reaction NAD(+) + ATP = ADP + NADP(+) + H(+). In terms of biological role, involved in the regulation of the intracellular balance of NAD and NADP, and is a key enzyme in the biosynthesis of NADP. Catalyzes specifically the phosphorylation on 2'-hydroxyl of the adenosine moiety of NAD to yield NADP. The sequence is that of NAD kinase from Pectobacterium atrosepticum (strain SCRI 1043 / ATCC BAA-672) (Erwinia carotovora subsp. atroseptica).